We begin with the raw amino-acid sequence, 240 residues long: tRNA (guanine-N(1)-)-methyltransferase (240 aa).

S-adenosyl-L-methionine-binding positions include glycine 110 and 129 to 134; that span reads LGDFVL.

Belongs to the RNA methyltransferase TrmD family. Homodimer.

Its subcellular location is the cytoplasm. It carries out the reaction guanosine(37) in tRNA + S-adenosyl-L-methionine = N(1)-methylguanosine(37) in tRNA + S-adenosyl-L-homocysteine + H(+). Functionally, specifically methylates guanosine-37 in various tRNAs. The polypeptide is tRNA (guanine-N(1)-)-methyltransferase (Clostridium botulinum (strain ATCC 19397 / Type A)).